A 184-amino-acid polypeptide reads, in one-letter code: dCTP deaminase (184 aa).

DCTP is bound by residues 107–112, 131–133, glutamine 152, tyrosine 166, and glutamine 176; these read KSTYAR and TLE. Catalysis depends on glutamate 133, which acts as the Proton donor/acceptor.

It belongs to the dCTP deaminase family. In terms of assembly, homotrimer.

It carries out the reaction dCTP + H2O + H(+) = dUTP + NH4(+). The protein operates within pyrimidine metabolism; dUMP biosynthesis; dUMP from dCTP (dUTP route): step 1/2. In terms of biological role, catalyzes the deamination of dCTP to dUTP. This chain is dCTP deaminase, found in Novosphingobium aromaticivorans (strain ATCC 700278 / DSM 12444 / CCUG 56034 / CIP 105152 / NBRC 16084 / F199).